Here is a 199-residue protein sequence, read N- to C-terminus: 5'-deoxynucleotidase YfbR (199 aa).

Substrate is bound by residues 18–19 (RW) and histidine 33. Positions 30 to 142 (VSEHSLQVAM…VKQADALCAY (113 aa)) constitute an HD domain. Residues histidine 33, histidine 68, and aspartate 69 each coordinate a divalent metal cation. Residues aspartate 69, 77 to 80 (DLPT), and aspartate 137 each bind substrate. Aspartate 137 lines the a divalent metal cation pocket.

It belongs to the 5DNU family. Homodimer. Requires a divalent metal cation as cofactor.

The protein localises to the cytoplasm. It carries out the reaction a 2'-deoxyribonucleoside 5'-phosphate + H2O = a 2'-deoxyribonucleoside + phosphate. Functionally, catalyzes the strictly specific dephosphorylation of 2'-deoxyribonucleoside 5'-monophosphates. This is 5'-deoxynucleotidase YfbR from Salmonella agona (strain SL483).